The following is a 576-amino-acid chain: MNISAVFNALLVSIMAAVLWKHVKLLEQFYVIEEELELTRQSQELSQVRIDYQAALQALVEDGTRMVCSGRMHTDRVCRFESLCYSTEAEEFVFFHSNSSIMLPNLGPRRFQPALLDLSSVDDHNTQYFNFIELPAAALKFMPKPVFVPDVALIMNRFNPDNLMHVFHDDLIPIFYTIQQFADLDFESRLFFMEGWNEGLHFELYKFMSNKQPLLKEQLKTLGRLLCFTKSYVGLSKITTWYQYGFVQPQGPKANILVSGNEIRHFAKFMMGKLNITKDQNAAEAYIVLFSRSMNRLIVNEAELLLALAQEFQMKTITVSLEDHSFADIVRLISNATMLVSMHGAQLITSLFLPKGAIVVELFPYGVNPEHYTPYKTLSTLPGMELQYVAWQNTEEENTIAYPNRPWEQGGIVHLDKTEQERIKKSKEVPRHLCCRNPEWLFRIYQDTKVNISSLIQVIKSKTKLGSRRQKWTQGLYPGKVRESKCQASAQGTGEAKLFVSWQIPWNLKFLKVRDVKYEVWIQEQGENSYMPYILSQQNYTFSENIKPLTTYLVWIRCIFNKTLLGPFAEVLVCNT.

Topologically, residues 1-4 (MNIS) are cytoplasmic. The chain crosses the membrane as a helical; Signal-anchor for type II membrane protein span at residues 5–25 (AVFNALLVSIMAAVLWKHVKL). At 26–576 (LEQFYVIEEE…PFAEVLVCNT (551 aa)) the chain is on the lumenal side. Residues Asn-98, Asn-275, Asn-335, Asn-451, Asn-539, and Asn-561 are each glycosylated (N-linked (GlcNAc...) asparagine). One can recognise a Fibronectin type-III domain in the interval 482-576 (RESKCQASAQ…PFAEVLVCNT (95 aa)).

This sequence belongs to the glycosyltransferase 61 family.

It is found in the endoplasmic reticulum membrane. The catalysed reaction is 3-O-(alpha-D-mannosyl)-L-threonyl-[protein] + UDP-N-acetyl-alpha-D-glucosamine = 3-O-(N-acetyl-beta-D-glucosaminyl-(1-&gt;4)-alpha-D-mannosyl)-L-threonyl-[protein] + UDP + H(+). It participates in protein modification; protein glycosylation. Functionally, O-linked mannose beta-1,4-N-acetylglucosaminyltransferase that transfers UDP-N-acetyl-D-glucosamine to the 4-position of the mannose to generate N-acetyl-D-glucosamine-beta-1,4-O-D-mannosylprotein. Involved in the biosynthesis of the phosphorylated O-mannosyl trisaccharide (N-acetylgalactosamine-beta-3-N-acetylglucosamine-beta-4-(phosphate-6-)mannose), a carbohydrate structure present in alpha-dystroglycan (DAG1), which is required for binding laminin G-like domain-containing extracellular proteins with high affinity. This chain is Protein O-linked-mannose beta-1,4-N-acetylglucosaminyltransferase 2 (pomgnt2), found in Xenopus tropicalis (Western clawed frog).